A 307-amino-acid chain; its full sequence is UDP-3-O-acyl-N-acetylglucosamine deacetylase (307 aa).

Zn(2+) is bound by residues H78, H241, and D245. H268 (proton donor) is an active-site residue.

Belongs to the LpxC family. It depends on Zn(2+) as a cofactor.

The enzyme catalyses a UDP-3-O-[(3R)-3-hydroxyacyl]-N-acetyl-alpha-D-glucosamine + H2O = a UDP-3-O-[(3R)-3-hydroxyacyl]-alpha-D-glucosamine + acetate. It participates in glycolipid biosynthesis; lipid IV(A) biosynthesis; lipid IV(A) from (3R)-3-hydroxytetradecanoyl-[acyl-carrier-protein] and UDP-N-acetyl-alpha-D-glucosamine: step 2/6. Catalyzes the hydrolysis of UDP-3-O-myristoyl-N-acetylglucosamine to form UDP-3-O-myristoylglucosamine and acetate, the committed step in lipid A biosynthesis. This is UDP-3-O-acyl-N-acetylglucosamine deacetylase from Variovorax paradoxus (strain S110).